We begin with the raw amino-acid sequence, 463 residues long: L-seryl-tRNA(Sec) selenium transferase (463 aa).

Position 295 is an N6-(pyridoxal phosphate)lysine (K295).

The protein belongs to the SelA family. Homodecamer; pentamer of dimers. Binds only one seryl-tRNA(Sec) per dimer. The cofactor is pyridoxal 5'-phosphate.

The protein resides in the cytoplasm. It catalyses the reaction L-seryl-tRNA(Sec) + selenophosphate + H(+) = L-selenocysteinyl-tRNA(Sec) + phosphate. The protein operates within aminoacyl-tRNA biosynthesis; selenocysteinyl-tRNA(Sec) biosynthesis; selenocysteinyl-tRNA(Sec) from L-seryl-tRNA(Sec) (bacterial route): step 1/1. Functionally, converts seryl-tRNA(Sec) to selenocysteinyl-tRNA(Sec) required for selenoprotein biosynthesis. The sequence is that of L-seryl-tRNA(Sec) selenium transferase from Escherichia coli (strain SMS-3-5 / SECEC).